We begin with the raw amino-acid sequence, 365 residues long: N-acetylgalactosamine-N,N'-diacetylbacillosaminyl-diphospho-undecaprenol 4-alpha-N-acetylgalactosaminyltransferase (365 aa).

Belongs to the glycosyltransferase group 1 family.

The protein resides in the cell inner membrane. The enzyme catalyses N-acetyl-alpha-D-galactosaminyl-(1-&gt;3)-N,N'-diacetyl-alpha-D-bacillosaminyl-tri-trans,hepta-cis-undecaprenyl diphosphate + UDP-N-acetyl-alpha-D-galactosamine = N-acetyl-alpha-D-galactosaminyl-(1-&gt;4)-N-acetyl-alpha-D-galactosaminyl-(1-&gt;3)-N,N'-diacetyl-alpha-D-bacillosaminyl-tri-trans,heptacis-undecaprenyl diphosphate + UDP + H(+). Its pathway is protein modification; protein glycosylation. Its function is as follows. Adds a GalNAc residue on to the Und-PP-Bac2,4diNAc-GalNAc disaccharide in the N-linked protein glycosylation pathway. Transfers the third sugar in the heptasaccharide biosynthesis. This Campylobacter jejuni subsp. jejuni serotype O:2 (strain ATCC 700819 / NCTC 11168) protein is N-acetylgalactosamine-N,N'-diacetylbacillosaminyl-diphospho-undecaprenol 4-alpha-N-acetylgalactosaminyltransferase (pglJ).